A 221-amino-acid chain; its full sequence is Deep sea actinoporin Cjtox II (221 aa).

The signal sequence occupies residues methionine 1–alanine 19. The propeptide occupies leucine 20 to lysine 42. 7 residues coordinate phosphocholine: serine 96, valine 129, serine 147, proline 149, tyrosine 175, tyrosine 179, and tyrosine 180. Residues serine 147–lysine 162 form a trp-rich region, which is important for the binding to lipid membrane region. Residues lysine 186 to aspartate 188 carry the Cell attachment site, crucial for protein stability motif.

It belongs to the actinoporin family. Sea anemone subfamily. As to quaternary structure, octamer or nonamer in membranes. Monomer in the soluble state. In terms of tissue distribution, expressed in actinopharynx and in gastric filaments. Is not expressed in tentacles.

Its subcellular location is the secreted. The protein resides in the nematocyst. It localises to the target cell membrane. Functionally, may be involved in digestion of prey. Pore-forming protein that forms cations-selective hydrophilic pores of around 1 nm and causes cytolysis. Pore formation is a multi-step process that involves specific recognition of membrane sphingomyelin (but neither cholesterol nor phosphatidylcholine) using aromatic rich region and adjacent phosphocholine (POC) binding site, firm binding to the membrane (mainly driven by hydrophobic interactions) accompanied by the transfer of the N-terminal region to the lipid-water interface and finally pore formation after oligomerization of monomers. Shows hemolytic activity on equine erythrocytes. Hemolysis is highly inhibited in presence of sphingomyelin, suggesting that this protein targets sphingomyelin. The chain is Deep sea actinoporin Cjtox II from Cribrinopsis japonica (Deep-sea anemone).